Consider the following 175-residue polypeptide: DPY30 domain-containing protein 1 (175 aa).

Positions 94–112 are enriched in basic and acidic residues; the sequence is QQKEKQKSEDFETGQEKSF. Disordered stretches follow at residues 94–134 and 152–175; these read QQKE…QAEE and APNL…SAPP.

Belongs to the dpy-30 family. In terms of assembly, component of the axonemal radial spoke complex 1 (RS1), at least composed of spoke head proteins RSPH1, RSPH3, RSPH9 and the cilia-specific component RSPH4A or sperm-specific component RSPH6A, spoke stalk proteins RSPH14, DNAJB13, DYDC1, ROPN1L and NME5, and the anchor protein IQUB. Interacts with SH3GL3.

It is found in the cytoplasm. It localises to the cytoskeleton. The protein localises to the flagellum axoneme. Its function is as follows. Functions as part of axonemal radial spoke complexes that play an important part in the motility of sperm and cilia. Plays a crucial role during acrosome biogenesis. In Mus musculus (Mouse), this protein is DPY30 domain-containing protein 1 (Dydc1).